An 832-amino-acid chain; its full sequence is WD repeat-containing protein 75 (832 aa).

13 WD repeats span residues Lys4–Ser43, Glu47–Asp86, Gly90–Ala134, Lys148–Arg187, Leu196–Arg233, Lys239–Gln278, Asp281–Glu320, Ser326–Ser364, Gln378–Ala425, Ser432–Cys474, Tyr485–Ser523, Trp527–Asn567, and Ala572–Lys609. Disordered regions lie at residues Gln704–Gly723 and Val759–Arg811. Residues Asp764 to Ala785 are compositionally biased toward acidic residues. Positions Asp799–Arg811 are enriched in basic and acidic residues.

In terms of assembly, component of the proposed t-UTP subcomplex of the ribosomal small subunit (SSU) processome. SSU processome is composed of more than 70 proteins and the RNA chaperone small nucleolar RNA (snoRNA) U3.

The protein localises to the nucleus. Its subcellular location is the nucleolus. In terms of biological role, ribosome biogenesis factor. Part of the small subunit (SSU) processome, first precursor of the small eukaryotic ribosomal subunit. During the assembly of the SSU processome in the nucleolus, many ribosome biogenesis factors, an RNA chaperone and ribosomal proteins associate with the nascent pre-rRNA and work in concert to generate RNA folding, modifications, rearrangements and cleavage as well as targeted degradation of pre-ribosomal RNA by the RNA exosome. Involved in nucleolar processing of pre-18S ribosomal RNA. Required for optimal pre-ribosomal RNA transcription by RNA polymerase I. This is WD repeat-containing protein 75 (wdr75) from Danio rerio (Zebrafish).